Reading from the N-terminus, the 408-residue chain is 1-deoxy-D-xylulose 5-phosphate reductoisomerase (408 aa).

NADPH contacts are provided by Thr-27, Gly-28, Ser-29, Ile-30, Ala-53, Arg-54, Asn-55, and Asn-140. Residue Lys-141 participates in 1-deoxy-D-xylulose 5-phosphate binding. Position 142 (Glu-142) interacts with NADPH. Asp-166 serves as a coordination point for Mn(2+). 4 residues coordinate 1-deoxy-D-xylulose 5-phosphate: Ser-167, Glu-168, Ser-192, and His-215. A Mn(2+)-binding site is contributed by Glu-168. NADPH is bound at residue Gly-221. The 1-deoxy-D-xylulose 5-phosphate site is built by Ser-228, Asn-233, Lys-234, and Glu-237. Glu-237 contacts Mn(2+).

The protein belongs to the DXR family. Requires Mg(2+) as cofactor. The cofactor is Mn(2+).

It catalyses the reaction 2-C-methyl-D-erythritol 4-phosphate + NADP(+) = 1-deoxy-D-xylulose 5-phosphate + NADPH + H(+). It functions in the pathway isoprenoid biosynthesis; isopentenyl diphosphate biosynthesis via DXP pathway; isopentenyl diphosphate from 1-deoxy-D-xylulose 5-phosphate: step 1/6. Catalyzes the NADPH-dependent rearrangement and reduction of 1-deoxy-D-xylulose-5-phosphate (DXP) to 2-C-methyl-D-erythritol 4-phosphate (MEP). The polypeptide is 1-deoxy-D-xylulose 5-phosphate reductoisomerase (Nitratidesulfovibrio vulgaris (strain ATCC 29579 / DSM 644 / CCUG 34227 / NCIMB 8303 / VKM B-1760 / Hildenborough) (Desulfovibrio vulgaris)).